The following is a 313-amino-acid chain: MNIILAKPRGFCAGVKRALLIVENALKIYKKTIYVQHELVHNQYVIETLRQKGVVFVEDISDIPNNSIVVFSAHGVSKKIKKKAIKKNLTILNATCPLVTKVHLEVSKSSKNGIETILIGHRGHPEVIGTIGQYDNKKGKIHLIEDIEDVNQLTIKIDKKLNFFTQTTLSIKNTQSIILALKKKFLNISGPKKEDICYATTNRQNAIIKLSKITDIILVIGSKNSSNSSRLSELGKETGVFTKQIESFSDIKEEWLKNKKNIGITAGASAPDILVEEVIKHLKKLGFKNPPKEMLGDEEKTIFKIPKNLNVQN.

Cys-12 provides a ligand contact to [4Fe-4S] cluster. Residues His-41 and His-74 each coordinate (2E)-4-hydroxy-3-methylbut-2-enyl diphosphate. His-41 and His-74 together coordinate dimethylallyl diphosphate. Residues His-41 and His-74 each coordinate isopentenyl diphosphate. Cys-96 serves as a coordination point for [4Fe-4S] cluster. His-124 lines the (2E)-4-hydroxy-3-methylbut-2-enyl diphosphate pocket. His-124 serves as a coordination point for dimethylallyl diphosphate. His-124 is an isopentenyl diphosphate binding site. The active-site Proton donor is the Glu-126. Thr-167 contacts (2E)-4-hydroxy-3-methylbut-2-enyl diphosphate. Cys-197 is a [4Fe-4S] cluster binding site. Ser-225, Ser-226, Asn-227, and Ser-269 together coordinate (2E)-4-hydroxy-3-methylbut-2-enyl diphosphate. Ser-225, Ser-226, Asn-227, and Ser-269 together coordinate dimethylallyl diphosphate. Ser-225, Ser-226, Asn-227, and Ser-269 together coordinate isopentenyl diphosphate.

The protein belongs to the IspH family. As to quaternary structure, homodimer. The cofactor is [4Fe-4S] cluster.

It catalyses the reaction isopentenyl diphosphate + 2 oxidized [2Fe-2S]-[ferredoxin] + H2O = (2E)-4-hydroxy-3-methylbut-2-enyl diphosphate + 2 reduced [2Fe-2S]-[ferredoxin] + 2 H(+). The enzyme catalyses dimethylallyl diphosphate + 2 oxidized [2Fe-2S]-[ferredoxin] + H2O = (2E)-4-hydroxy-3-methylbut-2-enyl diphosphate + 2 reduced [2Fe-2S]-[ferredoxin] + 2 H(+). It participates in isoprenoid biosynthesis; dimethylallyl diphosphate biosynthesis; dimethylallyl diphosphate from (2E)-4-hydroxy-3-methylbutenyl diphosphate: step 1/1. The protein operates within isoprenoid biosynthesis; isopentenyl diphosphate biosynthesis via DXP pathway; isopentenyl diphosphate from 1-deoxy-D-xylulose 5-phosphate: step 6/6. In terms of biological role, catalyzes the conversion of 1-hydroxy-2-methyl-2-(E)-butenyl 4-diphosphate (HMBPP) into a mixture of isopentenyl diphosphate (IPP) and dimethylallyl diphosphate (DMAPP). Acts in the terminal step of the DOXP/MEP pathway for isoprenoid precursor biosynthesis. The polypeptide is 4-hydroxy-3-methylbut-2-enyl diphosphate reductase (Buchnera aphidicola subsp. Schizaphis graminum (strain Sg)).